Reading from the N-terminus, the 298-residue chain is Probable protein phosphatase 2C 26 (298 aa).

A PPM-type phosphatase domain is found at 48–295; it reads SVGIHAIPHP…DDVTVIVAKV (248 aa). Mn(2+)-binding residues include aspartate 82, glycine 83, aspartate 213, and aspartate 286.

This sequence belongs to the PP2C family. Requires Mg(2+) as cofactor. Mn(2+) serves as cofactor.

The catalysed reaction is O-phospho-L-seryl-[protein] + H2O = L-seryl-[protein] + phosphate. It catalyses the reaction O-phospho-L-threonyl-[protein] + H2O = L-threonyl-[protein] + phosphate. This Arabidopsis thaliana (Mouse-ear cress) protein is Probable protein phosphatase 2C 26.